Consider the following 432-residue polypeptide: Ubiquitin-like modifier-activating enzyme 5 (432 aa).

The tract at residues Glu25–Ala47 is disordered. The span at Asn29–Arg44 shows a compositional bias: polar residues. ATP is bound by residues Gly96, Asp117, Lys140, Asn163, and Asn196. Zn(2+) contacts are provided by Cys238 and Cys241. Cys262 acts as the Glycyl thioester intermediate in catalysis. Zn(2+) is bound by residues Cys315 and Cys320. The segment at Asp363–Val406 is disordered. Positions Pro386–Val406 are enriched in polar residues.

It belongs to the ubiquitin-activating E1 family. UBA5 subfamily. As to quaternary structure, interacts with ufc-1.

Its function is as follows. E1-like enzyme which activates ufm-1. Required for interaction between ufm-1 and ufc-1. This is Ubiquitin-like modifier-activating enzyme 5 from Caenorhabditis briggsae.